The following is a 1137-amino-acid chain: Voltage-dependent calcium channel subunit alpha-2/delta-4 (1137 aa).

Residues 1–19 (MVCGCSALLPLPNPRPTMP) form the signal peptide. Residues 20 to 1115 (ATPNFLANPS…AQDCGGASDT (1096 aa)) are Extracellular-facing. Asn201 is a glycosylation site (N-linked (GlcNAc...) asparagine). Positions 291–473 (DIVILVDVSG…ENVMEYLHVL (183 aa)) constitute a VWFA domain. Residues Asp297, Ser299, and Ser301 each contribute to the a divalent metal cation site. The MIDAS-like motif signature appears at 297 to 301 (DVSGS). An intrachain disulfide couples Cys447 to Cys1097. The Cache domain maps to 487–580 (WTEAYMDSKL…RPLYREGKKL (94 aa)). Asn664 is a glycosylation site (N-linked (GlcNAc...) asparagine). A helical transmembrane segment spans residues 1116–1136 (SASPPLLLLPVCAWGLLPQLL). A topological domain (cytoplasmic) is located at residue Arg1137.

This sequence belongs to the calcium channel subunit alpha-2/delta family. In terms of assembly, dimer formed of alpha-2-2 and delta-2 chains; disulfide-linked. Voltage-dependent calcium channels are multisubunit complexes, consisting of alpha-1 (CACNA1), alpha-2 (CACNA2D), beta (CACNB) and delta (CACNA2D) subunits in a 1:1:1:1 ratio. Interacts with CACNA1C and CACNB3. In terms of processing, may be proteolytically processed into subunits alpha-2-4 and delta-4 that are disulfide-linked. It is however unclear whether such cleavage really takes place in vivo and has a functional role. Predominantly expressed in certain types of endocrine cells. Present in the Paneth cells of the small intestine. Also present in the erythroblasts in the fetal liver, in the cells of the zona reticularis of the adrenal gland and in the basophils of the pituitary. Present at low level in some brain regions such as the cerebellum (at protein level).

The protein resides in the membrane. Functionally, the alpha-2/delta subunit of voltage-dependent calcium channels regulates calcium current density and activation/inactivation kinetics of the calcium channel. This Homo sapiens (Human) protein is Voltage-dependent calcium channel subunit alpha-2/delta-4 (CACNA2D4).